The primary structure comprises 274 residues: uncharacterized protein (274 aa).

Residues 99-206 adopt a coiled-coil conformation; it reads NNVISGYVDL…ESEMEIFIQK (108 aa).

This is an uncharacterized protein from Dictyostelium discoideum (Social amoeba).